The primary structure comprises 648 residues: Forkhead box protein N1 (648 aa).

A disordered region spans residues 1-95; sequence MVSLLPPQSD…PGPGSFRLSP (95 aa). Polar residues predominate over residues 38–50; sequence APQNKHANFSCSS. Residues 54 to 67 are compositionally biased toward pro residues; it reads DGPPERTPSLPPHS. A DNA-binding region (fork-head) is located at residues 271–367; sequence KPIYSYSILI…EELQKWKRKD (97 aa). Disordered regions lie at residues 392-432, 457-521, and 629-648; these read LGSP…APGP, HLSP…TLLP, and SAAAGPAVYLSPGSKPLALA. Positions 398–412 are enriched in pro residues; sequence GCPPPGLAGPGPIRP.

In terms of tissue distribution, bone marrow (at protein level). Expressed in thymus and skin.

The protein localises to the nucleus. Transcriptional regulator which regulates the development, differentiation, and function of thymic epithelial cells (TECs) both in the prenatal and postnatal thymus. Acts as a master regulator of the TECs lineage development and is required from the onset of differentiation in progenitor TECs in the developing fetus to the final differentiation steps through which TECs mature to acquire their full functionality. Regulates, either directly or indirectly the expression of a variety of genes that mediate diverse aspects of thymus development and function, including MHC Class II, DLL4, CCL25, CTSL, CD40 and PAX1. Regulates the differentiation of the immature TECs into functional cortical TECs (cTECs) and medullary TECs (mTECs). Essential for maintenance of mTECs population in the postnatal thymus. Involved in the morphogenesis and maintenance of the three-dimensional thymic microstructure which is necessary for a fully functional thymus. Plays an important role in the maintenance of hematopoiesis and particularly T lineage progenitors within the bone marrow niche with age. Essential for the vascularization of the thymus anlage. Promotes the terminal differentiation of epithelial cells in the epidermis and hair follicles, partly by negatively regulating the activity of protein kinase C. This Mus musculus (Mouse) protein is Forkhead box protein N1 (Foxn1).